The primary structure comprises 131 residues: Interleukin-13 (131 aa).

A signal peptide spans 1–18; sequence MALWVTAVLALACLGGLA. N-linked (GlcNAc...) asparagine glycans are attached at residues N42, N52, and N75. Intrachain disulfides connect C51–C79 and C67–C93.

The protein belongs to the IL-4/IL-13 family. Interacts with IL13RA2.

Its subcellular location is the secreted. In terms of biological role, cytokine that plays important roles in allergic inflammation and immune response to parasite infection. Synergizes with IL2 in regulating interferon-gamma synthesis. Stimulates B-cell proliferation, and activation of eosinophils, basophils, and mast cells. Plays an important role in controlling IL33 activity by modulating the production of transmembrane and soluble forms of interleukin-1 receptor-like 1/IL1RL1. Displays the capacity to antagonize Th1-driven proinflammatory immune response and downregulates synthesis of many proinflammatory cytokines including IL1, IL6, IL10, IL12 and TNF-alpha through a mechanism that partially involves suppression of NF-kappa-B. Also functions on nonhematopoietic cells, including endothelial cells where it induces vascular cell adhesion protein 1/VCAM1, which is important in the recruitment of eosinophils. Exerts its biological effects through its receptors which comprises the IL4R chain and the IL13RA1 chain, to activate JAK1 and TYK2, leading to the activation of STAT6. Aside from IL13RA1, another receptor IL13RA2 acts as a high affinity decoy for IL13 and mediates internalization and depletion of extracellular IL13. This Mus musculus (Mouse) protein is Interleukin-13 (Il13).